The chain runs to 277 residues: Glutamate racemase (277 aa).

Substrate is bound by residues 13–14 (DS) and 45–46 (YG). Cysteine 76 acts as the Proton donor/acceptor in catalysis. 77-78 (NT) is a binding site for substrate. Cysteine 186 acts as the Proton donor/acceptor in catalysis. 187-188 (TH) lines the substrate pocket.

The protein belongs to the aspartate/glutamate racemases family.

It catalyses the reaction L-glutamate = D-glutamate. It functions in the pathway cell wall biogenesis; peptidoglycan biosynthesis. Its function is as follows. Provides the (R)-glutamate required for cell wall biosynthesis. The sequence is that of Glutamate racemase from Ralstonia nicotianae (strain ATCC BAA-1114 / GMI1000) (Ralstonia solanacearum).